We begin with the raw amino-acid sequence, 64 residues long: Small ribosomal subunit protein bS21 (64 aa).

It belongs to the bacterial ribosomal protein bS21 family.

In Pelagibacter ubique (strain HTCC1062), this protein is Small ribosomal subunit protein bS21.